The primary structure comprises 305 residues: Beta-lactamase (305 aa).

Residues 1–34 constitute a signal peptide (tat-type signal); that stretch reads MGTTGARPSRRAVLTAAAGAAVAGIPLGGSTAFA. Ser-82 acts as the Acyl-ester intermediate in catalysis. 250 to 252 is a substrate binding site; it reads KTG.

The protein belongs to the class-A beta-lactamase family. In terms of processing, predicted to be exported by the Tat system. The position of the signal peptide cleavage has not been experimentally proven.

The catalysed reaction is a beta-lactam + H2O = a substituted beta-amino acid. The polypeptide is Beta-lactamase (Streptomyces lavendulae).